Reading from the N-terminus, the 241-residue chain is Adapter protein MecA (241 aa).

The interval 77-102 is disordered; that stretch reads KNTDEDDVADESQGDASVDSEHPDQV. Over residues 80 to 89 the composition is skewed to acidic residues; it reads DEDDVADESQ.

It belongs to the MecA family. As to quaternary structure, homodimer.

Enables the recognition and targeting of unfolded and aggregated proteins to the ClpC protease or to other proteins involved in proteolysis. This chain is Adapter protein MecA, found in Levilactobacillus brevis (strain ATCC 367 / BCRC 12310 / CIP 105137 / JCM 1170 / LMG 11437 / NCIMB 947 / NCTC 947) (Lactobacillus brevis).